The primary structure comprises 345 residues: Phenylalanine--tRNA ligase alpha subunit (345 aa).

Glu-259 contributes to the Mg(2+) binding site.

It belongs to the class-II aminoacyl-tRNA synthetase family. Phe-tRNA synthetase alpha subunit type 1 subfamily. In terms of assembly, tetramer of two alpha and two beta subunits. The cofactor is Mg(2+).

It localises to the cytoplasm. It carries out the reaction tRNA(Phe) + L-phenylalanine + ATP = L-phenylalanyl-tRNA(Phe) + AMP + diphosphate + H(+). This is Phenylalanine--tRNA ligase alpha subunit from Lactococcus lactis subsp. cremoris (strain MG1363).